The primary structure comprises 371 residues: Cytochrome b (371 aa).

A run of 4 helical transmembrane segments spans residues 25–45 (FGSMLLSCLFLQTTTGFFLAI), 69–90 (WIMQNTHAISASAFFICIYIHI), 105–125 (WLTGVALLTTLMATAFFGYVL), and 170–190 (FFALHFILPFLIISLSSIHII). Residues histidine 75 and histidine 89 each contribute to the heme b site. Positions 174 and 188 each coordinate heme b. Residue histidine 193 participates in a ubiquinone binding. 4 consecutive transmembrane segments (helical) span residues 218–238 (YKDLLMFITLMTMLLLTLSFM), 280–300 (LGGALALTMSIIILTTAPFTH), 312–332 (LAQTLFWTLIATFITITWAAT), and 339–358 (FLLISQTTAILYFSFFIMNP).

Belongs to the cytochrome b family. The cytochrome bc1 complex contains 3 respiratory subunits (MT-CYB, CYC1 and UQCRFS1), 2 core proteins (UQCRC1 and UQCRC2) and probably 6 low-molecular weight proteins. Requires heme b as cofactor.

It localises to the mitochondrion inner membrane. Its function is as follows. Component of the ubiquinol-cytochrome c reductase complex (complex III or cytochrome b-c1 complex) that is part of the mitochondrial respiratory chain. The b-c1 complex mediates electron transfer from ubiquinol to cytochrome c. Contributes to the generation of a proton gradient across the mitochondrial membrane that is then used for ATP synthesis. The polypeptide is Cytochrome b (MT-CYB) (Laticauda colubrina (Yellow-lipped sea krait)).